A 1796-amino-acid polypeptide reads, in one-letter code: Y' element ATP-dependent helicase protein 1 copy 5 (1796 aa).

The segment at 743–767 (AGEAASSDHDQKISRVTRKRPREPK) is disordered. Residues 797–974 (EIYMADTPSV…LQRIGLTGLA (178 aa)) form the Helicase ATP-binding domain. 810–817 (APPGYGKT) serves as a coordination point for ATP. The region spanning 1031-1180 (KLLLALFEIE…EFYGLESKKG (150 aa)) is the Helicase C-terminal domain. Disordered regions lie at residues 1254-1278 (ANAS…NVRT) and 1294-1421 (TTES…DINK). Residues 1294 to 1397 (TTESTNSSTN…ATTTESTNAS (104 aa)) are compositionally biased toward low complexity. Residues 1398–1421 (AKEDANKDGNAEDNRFHPVTDINK) are compositionally biased toward basic and acidic residues.

The protein belongs to the helicase family. Yeast subtelomeric Y' repeat subfamily.

Functionally, catalyzes DNA unwinding and is involved in telomerase-independent telomere maintenance. This is Y' element ATP-dependent helicase protein 1 copy 5 (YRF1-5) from Saccharomyces cerevisiae (strain ATCC 204508 / S288c) (Baker's yeast).